The chain runs to 539 residues: CTP synthase (539 aa).

Residues Met-1–Leu-268 are amidoligase domain. Residue Ser-15 coordinates CTP. Ser-15 is a UTP binding site. Ser-16–Ile-21 contributes to the ATP binding site. Tyr-56 contacts L-glutamine. Residue Asp-73 coordinates ATP. Mg(2+)-binding residues include Asp-73 and Glu-143. CTP-binding positions include Asp-150–Glu-152, Lys-189–Gln-194, and Lys-225. UTP is bound by residues Lys-189–Gln-194 and Lys-225. The region spanning Thr-294–Lys-536 is the Glutamine amidotransferase type-1 domain. Gly-356 serves as a coordination point for L-glutamine. Cys-383 (nucleophile; for glutamine hydrolysis) is an active-site residue. L-glutamine is bound by residues Leu-384 to Gln-387, Glu-407, and Arg-464. Residues His-509 and Glu-511 contribute to the active site.

It belongs to the CTP synthase family. As to quaternary structure, homotetramer.

It carries out the reaction UTP + L-glutamine + ATP + H2O = CTP + L-glutamate + ADP + phosphate + 2 H(+). The catalysed reaction is L-glutamine + H2O = L-glutamate + NH4(+). The enzyme catalyses UTP + NH4(+) + ATP = CTP + ADP + phosphate + 2 H(+). Its pathway is pyrimidine metabolism; CTP biosynthesis via de novo pathway; CTP from UDP: step 2/2. With respect to regulation, allosterically activated by GTP, when glutamine is the substrate; GTP has no effect on the reaction when ammonia is the substrate. The allosteric effector GTP functions by stabilizing the protein conformation that binds the tetrahedral intermediate(s) formed during glutamine hydrolysis. Inhibited by the product CTP, via allosteric rather than competitive inhibition. Its function is as follows. Catalyzes the ATP-dependent amination of UTP to CTP with either L-glutamine or ammonia as the source of nitrogen. Regulates intracellular CTP levels through interactions with the four ribonucleotide triphosphates. This is CTP synthase from Porphyromonas gingivalis (strain ATCC BAA-308 / W83).